A 137-amino-acid polypeptide reads, in one-letter code: Basic phospholipase A2 homolog 2 (137 aa).

The first 16 residues, 1–16 (MRTLWIMAVLLVGVEG), serve as a signal peptide directing secretion. 7 disulfides stabilise this stretch: Cys42–Cys131, Cys44–Cys60, Cys59–Cys111, Cys65–Cys137, Cys66–Cys104, Cys73–Cys97, and Cys91–Cys102. The important for membrane-damaging activities in eukaryotes and bacteria; heparin-binding stretch occupies residues 121–133 (KKYRYYLKPLCKK).

Belongs to the phospholipase A2 family. Group II subfamily. K49 sub-subfamily. Homodimer; non-covalently linked. Binds to heparin. It binds long-chain fatty acids covalently by a rapid, spontaneous, and autocatalytic process. When acylated, it binds to the surface of liposomes and isolated muscle membranes, with the fatty acid moiety inserted into the lipid bilayer and possibly acting as an anchor. In terms of tissue distribution, expressed by the venom gland.

The protein resides in the secreted. Heparin inhibits the myotoxic activity. Suramin inhibits the myotoxic activity. High level of membrane cholesterol content reduces cytolytic activity, whereas low level of membrane cholesterol content increases cytolytic activity. Functionally, snake venom phospholipase A2 homolog that lacks enzymatic activity. Is myotoxic and induces a dose-dependent edema in the mouse foot pad. Also exhibits strong anticoagulant effects by binding to factor Xa (F10) and inhibiting the prothrombinase activity (IC(50) is 3 nM). In addition, it shows cytotoxic activity to a variety of cell types and bactericidal activity to a variety of Gram-negative and Gram-positive bacteria. Also induces a very rapid release of large amounts of potassium ions and ATP from muscle cells, which accounts for the pain reaction characteristic of viperid envenomations. The released ATP amplifies the effect of the myotoxins, acting as a 'danger signal', which spreads and causes further damage by acting on purinergic receptors. A model of myotoxic mechanism has been proposed: an apo Lys49-PLA2 is activated by the entrance of a hydrophobic molecule (e.g. fatty acid) at the hydrophobic channel of the protein leading to a reorientation of a monomer. This reorientation causes a transition between 'inactive' to 'active' states, causing alignment of C-terminal and membrane-docking sites (MDoS) side-by-side and putting the membrane-disruption sites (MDiS) in the same plane, exposed to solvent and in a symmetric position for both monomers. The MDoS region stabilizes the toxin on membrane by the interaction of charged residues with phospholipid head groups. Subsequently, the MDiS region destabilizes the membrane with penetration of hydrophobic residues. This insertion causes a disorganization of the membrane, allowing an uncontrolled influx of ions (i.e. calcium and sodium), and eventually triggering irreversible intracellular alterations and cell death. The protein is Basic phospholipase A2 homolog 2 of Bothrops asper (Terciopelo).